Reading from the N-terminus, the 199-residue chain is Copper transport protein CTR4 (199 aa).

The next 2 helical transmembrane spans lie at 62–82 (KGMFAGSIIGIFFLCVLIELI) and 152–172 (AFFVMLLGMYFNVIVLIFIFL).

Belongs to the copper transporter (Ctr) (TC 1.A.56) family. SLC31A subfamily.

It is found in the membrane. In terms of biological role, required for high affinity copper (probably reduced Cu I) transport into the cell. Plays a role in fungal pathogenesis during host infection. In Cryptococcus neoformans var. grubii serotype A (strain H99 / ATCC 208821 / CBS 10515 / FGSC 9487) (Filobasidiella neoformans var. grubii), this protein is Copper transport protein CTR4.